The sequence spans 466 residues: Acetyl-coenzyme A carboxylase carboxyl transferase subunit beta, chloroplastic (466 aa).

A CoA carboxyltransferase N-terminal domain is found at 198 to 466 (LWIQCENCYE…FPLNQNSIGQ (269 aa)). Residues Cys202, Cys205, Cys221, and Cys224 each contribute to the Zn(2+) site. Residues 202-224 (CENCYELNYKKLLKSKMRICDEC) form a C4-type zinc finger.

Belongs to the AccD/PCCB family. In terms of assembly, acetyl-CoA carboxylase is a heterohexamer composed of biotin carboxyl carrier protein, biotin carboxylase and 2 subunits each of ACCase subunit alpha and ACCase plastid-coded subunit beta (accD). It depends on Zn(2+) as a cofactor.

It is found in the plastid. The protein localises to the chloroplast stroma. The catalysed reaction is N(6)-carboxybiotinyl-L-lysyl-[protein] + acetyl-CoA = N(6)-biotinyl-L-lysyl-[protein] + malonyl-CoA. The protein operates within lipid metabolism; malonyl-CoA biosynthesis; malonyl-CoA from acetyl-CoA: step 1/1. Its function is as follows. Component of the acetyl coenzyme A carboxylase (ACC) complex. Biotin carboxylase (BC) catalyzes the carboxylation of biotin on its carrier protein (BCCP) and then the CO(2) group is transferred by the transcarboxylase to acetyl-CoA to form malonyl-CoA. The chain is Acetyl-coenzyme A carboxylase carboxyl transferase subunit beta, chloroplastic from Fagopyrum esculentum subsp. ancestrale (Wild buckwheat).